The primary structure comprises 105 residues: Co-chaperonin GroES 3 (105 aa).

The protein belongs to the GroES chaperonin family. Heptamer of 7 subunits arranged in a ring. Interacts with the chaperonin GroEL.

Its subcellular location is the cytoplasm. In terms of biological role, together with the chaperonin GroEL, plays an essential role in assisting protein folding. The GroEL-GroES system forms a nano-cage that allows encapsulation of the non-native substrate proteins and provides a physical environment optimized to promote and accelerate protein folding. GroES binds to the apical surface of the GroEL ring, thereby capping the opening of the GroEL channel. The sequence is that of Co-chaperonin GroES 3 from Rhizobium meliloti (strain 1021) (Ensifer meliloti).